Here is a 179-residue protein sequence, read N- to C-terminus: Large ribosomal subunit protein uL5 (179 aa).

It belongs to the universal ribosomal protein uL5 family. In terms of assembly, part of the 50S ribosomal subunit; part of the 5S rRNA/L5/L18/L25 subcomplex. Contacts the 5S rRNA and the P site tRNA. Forms a bridge to the 30S subunit in the 70S ribosome.

This is one of the proteins that bind and probably mediate the attachment of the 5S RNA into the large ribosomal subunit, where it forms part of the central protuberance. In the 70S ribosome it contacts protein S13 of the 30S subunit (bridge B1b), connecting the 2 subunits; this bridge is implicated in subunit movement. Contacts the P site tRNA; the 5S rRNA and some of its associated proteins might help stabilize positioning of ribosome-bound tRNAs. This is Large ribosomal subunit protein uL5 from Desulfosudis oleivorans (strain DSM 6200 / JCM 39069 / Hxd3) (Desulfococcus oleovorans).